A 93-amino-acid chain; its full sequence is Large ribosomal subunit protein uL23cz/uL23cy (93 aa).

This sequence belongs to the universal ribosomal protein uL23 family. In terms of assembly, part of the 50S ribosomal subunit.

It localises to the plastid. Its subcellular location is the chloroplast. In terms of biological role, binds to 23S rRNA. The protein is Large ribosomal subunit protein uL23cz/uL23cy (rpl23-A) of Cucumis sativus (Cucumber).